The sequence spans 206 residues: Ribosomal RNA large subunit methyltransferase E (206 aa).

Gly60, Trp62, Asp80, Asp96, and Asp121 together coordinate S-adenosyl-L-methionine. The active-site Proton acceptor is the Lys161.

The protein belongs to the class I-like SAM-binding methyltransferase superfamily. RNA methyltransferase RlmE family.

Its subcellular location is the cytoplasm. It carries out the reaction uridine(2552) in 23S rRNA + S-adenosyl-L-methionine = 2'-O-methyluridine(2552) in 23S rRNA + S-adenosyl-L-homocysteine + H(+). Specifically methylates the uridine in position 2552 of 23S rRNA at the 2'-O position of the ribose in the fully assembled 50S ribosomal subunit. This Nitrosomonas eutropha (strain DSM 101675 / C91 / Nm57) protein is Ribosomal RNA large subunit methyltransferase E.